The following is a 608-amino-acid chain: Aspartate--tRNA(Asp/Asn) ligase (608 aa).

Glu-175 is an L-aspartate binding site. The segment at 199–202 (QLFK) is aspartate. Arg-221 is an L-aspartate binding site. ATP contacts are provided by residues 221 to 223 (RDE) and Gln-230. An L-aspartate-binding site is contributed by His-453. Glu-487 is a binding site for ATP. Arg-494 is an L-aspartate binding site. Position 539–542 (539–542 (GWDR)) interacts with ATP. The segment at 566–608 (IDPLTDAPAAITPQQRKEAGIDAKPKPKAEAQAEAQAEESAEK) is disordered. Basic and acidic residues predominate over residues 580 to 596 (QRKEAGIDAKPKPKAEA).

This sequence belongs to the class-II aminoacyl-tRNA synthetase family. Type 1 subfamily. Homodimer.

It localises to the cytoplasm. The catalysed reaction is tRNA(Asx) + L-aspartate + ATP = L-aspartyl-tRNA(Asx) + AMP + diphosphate. Aspartyl-tRNA synthetase with relaxed tRNA specificity since it is able to aspartylate not only its cognate tRNA(Asp) but also tRNA(Asn). Reaction proceeds in two steps: L-aspartate is first activated by ATP to form Asp-AMP and then transferred to the acceptor end of tRNA(Asp/Asn). The sequence is that of Aspartate--tRNA(Asp/Asn) ligase from Corynebacterium glutamicum (strain ATCC 13032 / DSM 20300 / JCM 1318 / BCRC 11384 / CCUG 27702 / LMG 3730 / NBRC 12168 / NCIMB 10025 / NRRL B-2784 / 534).